The primary structure comprises 245 residues: Eukaryotic translation initiation factor 4E type 2 (245 aa).

Basic and acidic residues predominate over residues 1-38; the sequence is MNNKFDALKDDDSGDHDQNEENSTQKDGEKEKTDRDKS. A disordered region spans residues 1–52; the sequence is MNNKFDALKDDDSGDHDQNEENSTQKDGEKEKTDRDKSQSSGKRKAVVPGPA. Serine 13 is modified (phosphoserine). An EIF4EBP1/2/3 binding region spans residues 54–57; sequence HPLQ. 78–79 contributes to the mRNA binding site; the sequence is YE. The tract at residues 95 to 99 is EIF4EBP1/2/3 binding; the sequence is WKFYS. MRNA contacts are provided by residues histidine 110 and 124-125; that span reads WE. At lysine 134 the chain carries N6-acetyllysine; alternate. Lysine 134 participates in a covalent cross-link: Glycyl lysine isopeptide (Lys-Gly) (interchain with G-Cter in ISG15); alternate. Positions 150 to 157 are EIF4EBP1/2/3 binding; that stretch reads NLILAMLG. Residues 174–179 and 222–224 each bind mRNA; these read RFQEDI and KMP. Lysine 222 is covalently cross-linked (Glycyl lysine isopeptide (Lys-Gly) (interchain with G-Cter in ISG15)).

The protein belongs to the eukaryotic initiation factor 4E family. As to quaternary structure, interacts with EIF4EBP1, EIF4EBP2 and EIF4EBP3. Does not interact with eIF4G (EIF4G1, EIF4G2 or EIF4G3). Component of the 4EHP-GYF2 complex, at least composed of EIF4E2, GIGYF2 and ZNF598. Interacts with GIGYF2 (via the 4EHP-binding motif); the interaction is direct. Interacts with EIF4ENIF1/4E-T (via YXXXXLphi motif); increasing affinity for the 7-methylguanosine-containing mRNA cap. Ubiquitinated by ARIH1. The consequences of ubiquitination are however unclear: according to a report, EIF4E2 ubiquitination leads to promote EIF4E2 cap-binding and protein translation arrest. According to another report ubiquitination leads to its subsequent degradation. Post-translationally, ISGylation enhances its cap structure-binding activity and translation-inhibition activity. Widely expressed with highest levels in testis, kidney and liver.

It is found in the cytoplasm. It localises to the P-body. Recognizes and binds the 7-methylguanosine-containing mRNA cap during an early step in the initiation. Acts as a repressor of translation initiation. In contrast to EIF4E, it is unable to bind eIF4G (EIF4G1, EIF4G2 or EIF4G3), suggesting that it acts by competing with EIF4E and block assembly of eIF4F at the cap. In P-bodies, component of a complex that promotes miRNA-mediated translational repression. Involved in virus-induced host response by mediating miRNA MIR34A-induced translational silencing which controls IFNB1 production by a negative feedback mechanism. In terms of biological role, component of the 4EHP-GYF2 complex, a multiprotein complex that acts as a repressor of translation initiation. In association with GIGYF2, assists ribosome-associated quality control (RQC) by sequestering the mRNA cap, blocking ribosome initiation and decreasing the translational load on problematic messages. Part of a pathway that works in parallel to RQC-mediated degradation of the stalled nascent polypeptide. GIGYF2 and EIF4E2 work downstream and independently of ZNF598, which seems to work as a scaffold that can recruit them to faulty mRNA even if alternative recruitment mechanisms may exist. This is Eukaryotic translation initiation factor 4E type 2 from Mus musculus (Mouse).